Reading from the N-terminus, the 248-residue chain is 5'-nucleotidase SurE (248 aa).

4 residues coordinate a divalent metal cation: D8, D9, S39, and N91.

Belongs to the SurE nucleotidase family. A divalent metal cation serves as cofactor.

The protein resides in the cytoplasm. The enzyme catalyses a ribonucleoside 5'-phosphate + H2O = a ribonucleoside + phosphate. Its function is as follows. Nucleotidase that shows phosphatase activity on nucleoside 5'-monophosphates. The sequence is that of 5'-nucleotidase SurE from Geobacter sp. (strain M21).